Here is a 206-residue protein sequence, read N- to C-terminus: Cytochrome c biogenesis ATP-binding export protein CcmA (206 aa).

In terms of domain architecture, ABC transporter spans 4 to 205 (LEGIDLTCIR…AGAAIQRLQL (202 aa)). 36-43 (GPNGSGKT) serves as a coordination point for ATP.

This sequence belongs to the ABC transporter superfamily. CcmA exporter (TC 3.A.1.107) family. The complex is composed of two ATP-binding proteins (CcmA) and two transmembrane proteins (CcmB).

The protein resides in the cell inner membrane. The enzyme catalyses heme b(in) + ATP + H2O = heme b(out) + ADP + phosphate + H(+). Functionally, part of the ABC transporter complex CcmAB involved in the biogenesis of c-type cytochromes; once thought to export heme, this seems not to be the case, but its exact role is uncertain. Responsible for energy coupling to the transport system. The sequence is that of Cytochrome c biogenesis ATP-binding export protein CcmA from Nitrosospira multiformis (strain ATCC 25196 / NCIMB 11849 / C 71).